Reading from the N-terminus, the 125-residue chain is Lectin (125 aa).

Residues 1–120 (MDYEILFSDE…CGGARRVICE (120 aa)) form the C-type lectin domain. 2 disulfides stabilise this stretch: C21-C119 and C96-C111.

In terms of assembly, homodimer.

Role in the defense system of the organism against microorganisms. This calcium-binding lectin binds galactose. This Polyandrocarpa misakiensis (Tunicate) protein is Lectin.